Here is a 160-residue protein sequence, read N- to C-terminus: 6,7-dimethyl-8-ribityllumazine synthase (160 aa).

Residues phenylalanine 23, 61–63 (SFE), and 85–87 (AVI) each bind 5-amino-6-(D-ribitylamino)uracil. 90–91 (DT) lines the (2S)-2-hydroxy-3-oxobutyl phosphate pocket. Histidine 93 acts as the Proton donor in catalysis. Phenylalanine 118 serves as a coordination point for 5-amino-6-(D-ribitylamino)uracil. Arginine 132 contacts (2S)-2-hydroxy-3-oxobutyl phosphate.

The protein belongs to the DMRL synthase family.

It carries out the reaction (2S)-2-hydroxy-3-oxobutyl phosphate + 5-amino-6-(D-ribitylamino)uracil = 6,7-dimethyl-8-(1-D-ribityl)lumazine + phosphate + 2 H2O + H(+). It participates in cofactor biosynthesis; riboflavin biosynthesis; riboflavin from 2-hydroxy-3-oxobutyl phosphate and 5-amino-6-(D-ribitylamino)uracil: step 1/2. Catalyzes the formation of 6,7-dimethyl-8-ribityllumazine by condensation of 5-amino-6-(D-ribitylamino)uracil with 3,4-dihydroxy-2-butanone 4-phosphate. This is the penultimate step in the biosynthesis of riboflavin. The chain is 6,7-dimethyl-8-ribityllumazine synthase from Synechococcus sp. (strain CC9605).